Here is a 148-residue protein sequence, read N- to C-terminus: Glutamyl-tRNA(Gln) amidotransferase subunit C, mitochondrial (148 aa).

The protein belongs to the GatC family. In terms of assembly, subunit of the heterotrimeric GatCAB amidotransferase (AdT) complex, composed of A, B and C subunits.

It localises to the mitochondrion. The enzyme catalyses L-glutamyl-tRNA(Gln) + L-glutamine + ATP + H2O = L-glutaminyl-tRNA(Gln) + L-glutamate + ADP + phosphate + H(+). Functionally, allows the formation of correctly charged Gln-tRNA(Gln) through the transamidation of misacylated Glu-tRNA(Gln) in the mitochondria. The reaction takes place in the presence of glutamine and ATP through an activated gamma-phospho-Glu-tRNA(Gln). This chain is Glutamyl-tRNA(Gln) amidotransferase subunit C, mitochondrial, found in Drosophila melanogaster (Fruit fly).